We begin with the raw amino-acid sequence, 279 residues long: MNAWNTIYDQFNPIAFSLGSIEVHWYGLAYACAIVTAFYMALRMIQKDPKRFPIERKEFESYFLWAELGIVLGARIGYILIYEPNSSYYLTHFWQIFNPFDSHGNFVGIRGMSYHGGLVGFLIASYLYSRKDLKKLLIYLDLIAISLPLGYVFGRIGNFLNQELVGRIVPKDSHLGQIIGIMVDNQLRYPSQLIEAFLEGVIVFLMVMWAKKHTKTRGLLIVVYGLGYSLMRFIAEFYREPDSQMGVYFLNLSMGQILSLFMVIVSLGILLYATKNSKK.

Helical transmembrane passes span 14 to 34, 62 to 82, 106 to 126, 136 to 156, 190 to 210, 218 to 238, and 252 to 272; these read IAFS…ACAI, YFLW…ILIY, FVGI…IASY, LLIY…FGRI, PSQL…VMWA, GLLI…AEFY, and LSMG…ILLY. Residue Arg-155 coordinates a 1,2-diacyl-sn-glycero-3-phospho-(1'-sn-glycerol).

This sequence belongs to the Lgt family.

The protein localises to the cell inner membrane. The enzyme catalyses L-cysteinyl-[prolipoprotein] + a 1,2-diacyl-sn-glycero-3-phospho-(1'-sn-glycerol) = an S-1,2-diacyl-sn-glyceryl-L-cysteinyl-[prolipoprotein] + sn-glycerol 1-phosphate + H(+). Its pathway is protein modification; lipoprotein biosynthesis (diacylglyceryl transfer). In terms of biological role, catalyzes the transfer of the diacylglyceryl group from phosphatidylglycerol to the sulfhydryl group of the N-terminal cysteine of a prolipoprotein, the first step in the formation of mature lipoproteins. This chain is Phosphatidylglycerol--prolipoprotein diacylglyceryl transferase, found in Helicobacter pylori (strain HPAG1).